We begin with the raw amino-acid sequence, 440 residues long: L-seryl-tRNA(Sec) selenium transferase (440 aa).

The residue at position 282 (K282) is an N6-(pyridoxal phosphate)lysine.

It belongs to the SelA family. The cofactor is pyridoxal 5'-phosphate.

The protein localises to the cytoplasm. The enzyme catalyses L-seryl-tRNA(Sec) + selenophosphate + H(+) = L-selenocysteinyl-tRNA(Sec) + phosphate. The protein operates within aminoacyl-tRNA biosynthesis; selenocysteinyl-tRNA(Sec) biosynthesis; selenocysteinyl-tRNA(Sec) from L-seryl-tRNA(Sec) (bacterial route): step 1/1. Functionally, converts seryl-tRNA(Sec) to selenocysteinyl-tRNA(Sec) required for selenoprotein biosynthesis. This chain is L-seryl-tRNA(Sec) selenium transferase, found in Campylobacter jejuni subsp. doylei (strain ATCC BAA-1458 / RM4099 / 269.97).